Reading from the N-terminus, the 925-residue chain is Protein translocase subunit SecA (925 aa).

ATP contacts are provided by residues Gln-87, 105–109 (GEGKT), and Asp-515. 4 residues coordinate Zn(2+): Cys-909, Cys-911, Cys-920, and His-921.

This sequence belongs to the SecA family. Monomer and homodimer. Part of the essential Sec protein translocation apparatus which comprises SecA, SecYEG and auxiliary proteins SecDF-YajC and YidC. Zn(2+) serves as cofactor.

Its subcellular location is the cell inner membrane. The protein localises to the cytoplasm. The catalysed reaction is ATP + H2O + cellular proteinSide 1 = ADP + phosphate + cellular proteinSide 2.. Functionally, part of the Sec protein translocase complex. Interacts with the SecYEG preprotein conducting channel. Has a central role in coupling the hydrolysis of ATP to the transfer of proteins into and across the cell membrane, serving both as a receptor for the preprotein-SecB complex and as an ATP-driven molecular motor driving the stepwise translocation of polypeptide chains across the membrane. This chain is Protein translocase subunit SecA, found in Cupriavidus taiwanensis (strain DSM 17343 / BCRC 17206 / CCUG 44338 / CIP 107171 / LMG 19424 / R1) (Ralstonia taiwanensis (strain LMG 19424)).